We begin with the raw amino-acid sequence, 630 residues long: Arginine--tRNA ligase (630 aa).

The 'HIGH' region motif lies at 120–130 (ANPVHPLHIGH).

The protein belongs to the class-I aminoacyl-tRNA synthetase family.

The protein resides in the cytoplasm. The enzyme catalyses tRNA(Arg) + L-arginine + ATP = L-arginyl-tRNA(Arg) + AMP + diphosphate. The sequence is that of Arginine--tRNA ligase from Pyrobaculum aerophilum (strain ATCC 51768 / DSM 7523 / JCM 9630 / CIP 104966 / NBRC 100827 / IM2).